Consider the following 181-residue polypeptide: ATP synthase subunit delta (181 aa).

Belongs to the ATPase delta chain family. F-type ATPases have 2 components, F(1) - the catalytic core - and F(0) - the membrane proton channel. F(1) has five subunits: alpha(3), beta(3), gamma(1), delta(1), epsilon(1). F(0) has three main subunits: a(1), b(2) and c(10-14). The alpha and beta chains form an alternating ring which encloses part of the gamma chain. F(1) is attached to F(0) by a central stalk formed by the gamma and epsilon chains, while a peripheral stalk is formed by the delta and b chains.

The protein localises to the cell membrane. Functionally, f(1)F(0) ATP synthase produces ATP from ADP in the presence of a proton or sodium gradient. F-type ATPases consist of two structural domains, F(1) containing the extramembraneous catalytic core and F(0) containing the membrane proton channel, linked together by a central stalk and a peripheral stalk. During catalysis, ATP synthesis in the catalytic domain of F(1) is coupled via a rotary mechanism of the central stalk subunits to proton translocation. In terms of biological role, this protein is part of the stalk that links CF(0) to CF(1). It either transmits conformational changes from CF(0) to CF(1) or is implicated in proton conduction. This chain is ATP synthase subunit delta, found in Bacillus pumilus (strain SAFR-032).